A 1155-amino-acid polypeptide reads, in one-letter code: DNA-directed RNA polymerase subunit beta (1155 aa).

The protein belongs to the RNA polymerase beta chain family. The RNAP catalytic core consists of 2 alpha, 1 beta, 1 beta' and 1 omega subunit. When a sigma factor is associated with the core the holoenzyme is formed, which can initiate transcription.

The enzyme catalyses RNA(n) + a ribonucleoside 5'-triphosphate = RNA(n+1) + diphosphate. Functionally, DNA-dependent RNA polymerase catalyzes the transcription of DNA into RNA using the four ribonucleoside triphosphates as substrates. The polypeptide is DNA-directed RNA polymerase subunit beta (Borrelia duttonii (strain Ly)).